Reading from the N-terminus, the 717-residue chain is Catalase-peroxidase (717 aa).

Positions Met1–Gly12 are cleaved as a signal peptide. Residues Trp93–Tyr221 constitute a cross-link (tryptophyl-tyrosyl-methioninium (Trp-Tyr) (with M-247)). Catalysis depends on His94, which acts as the Proton acceptor. A cross-link (tryptophyl-tyrosyl-methioninium (Tyr-Met) (with W-93)) is located at residues Tyr221–Met247. His262 contributes to the heme b binding site.

This sequence belongs to the peroxidase family. Peroxidase/catalase subfamily. In terms of assembly, homodimer or homotetramer. Requires heme b as cofactor. In terms of processing, formation of the three residue Trp-Tyr-Met cross-link is important for the catalase, but not the peroxidase activity of the enzyme.

It catalyses the reaction H2O2 + AH2 = A + 2 H2O. The catalysed reaction is 2 H2O2 = O2 + 2 H2O. Its function is as follows. Bifunctional enzyme with both catalase and broad-spectrum peroxidase activity. This is Catalase-peroxidase from Polynucleobacter asymbioticus (strain DSM 18221 / CIP 109841 / QLW-P1DMWA-1) (Polynucleobacter necessarius subsp. asymbioticus).